The sequence spans 148 residues: UPF0179 protein Mboo_1959 (148 aa).

Belongs to the UPF0179 family.

The polypeptide is UPF0179 protein Mboo_1959 (Methanoregula boonei (strain DSM 21154 / JCM 14090 / 6A8)).